The chain runs to 248 residues: Pyridoxine 5'-phosphate synthase (248 aa).

Residue Asn12 participates in 3-amino-2-oxopropyl phosphate binding. 14 to 15 (DH) is a 1-deoxy-D-xylulose 5-phosphate binding site. Position 23 (Arg23) interacts with 3-amino-2-oxopropyl phosphate. Residue His48 is the Proton acceptor of the active site. 1-deoxy-D-xylulose 5-phosphate contacts are provided by Arg50 and His55. Catalysis depends on Glu75, which acts as the Proton acceptor. Thr105 is a 1-deoxy-D-xylulose 5-phosphate binding site. His196 functions as the Proton donor in the catalytic mechanism. Residues Gly197 and 218–219 (GH) each bind 3-amino-2-oxopropyl phosphate.

Belongs to the PNP synthase family. In terms of assembly, homooctamer; tetramer of dimers.

It localises to the cytoplasm. It catalyses the reaction 3-amino-2-oxopropyl phosphate + 1-deoxy-D-xylulose 5-phosphate = pyridoxine 5'-phosphate + phosphate + 2 H2O + H(+). It participates in cofactor biosynthesis; pyridoxine 5'-phosphate biosynthesis; pyridoxine 5'-phosphate from D-erythrose 4-phosphate: step 5/5. In terms of biological role, catalyzes the complicated ring closure reaction between the two acyclic compounds 1-deoxy-D-xylulose-5-phosphate (DXP) and 3-amino-2-oxopropyl phosphate (1-amino-acetone-3-phosphate or AAP) to form pyridoxine 5'-phosphate (PNP) and inorganic phosphate. The polypeptide is Pyridoxine 5'-phosphate synthase (Ectopseudomonas mendocina (strain ymp) (Pseudomonas mendocina)).